Consider the following 294-residue polypeptide: 4-hydroxy-tetrahydrodipicolinate synthase (294 aa).

Pyruvate is bound at residue Thr-46. Catalysis depends on Tyr-135, which acts as the Proton donor/acceptor. The Schiff-base intermediate with substrate role is filled by Lys-164. Ile-205 serves as a coordination point for pyruvate.

This sequence belongs to the DapA family. Homotetramer; dimer of dimers.

Its subcellular location is the cytoplasm. It carries out the reaction L-aspartate 4-semialdehyde + pyruvate = (2S,4S)-4-hydroxy-2,3,4,5-tetrahydrodipicolinate + H2O + H(+). The protein operates within amino-acid biosynthesis; L-lysine biosynthesis via DAP pathway; (S)-tetrahydrodipicolinate from L-aspartate: step 3/4. In terms of biological role, catalyzes the condensation of (S)-aspartate-beta-semialdehyde [(S)-ASA] and pyruvate to 4-hydroxy-tetrahydrodipicolinate (HTPA). The protein is 4-hydroxy-tetrahydrodipicolinate synthase of Nitratiruptor sp. (strain SB155-2).